The sequence spans 354 residues: Uroporphyrinogen decarboxylase (354 aa).

Residues Arg27–Arg31, Asp77, Tyr154, Thr209, and His327 each bind substrate.

It belongs to the uroporphyrinogen decarboxylase family. As to quaternary structure, homodimer.

Its subcellular location is the cytoplasm. The enzyme catalyses uroporphyrinogen III + 4 H(+) = coproporphyrinogen III + 4 CO2. The protein operates within porphyrin-containing compound metabolism; protoporphyrin-IX biosynthesis; coproporphyrinogen-III from 5-aminolevulinate: step 4/4. In terms of biological role, catalyzes the decarboxylation of four acetate groups of uroporphyrinogen-III to yield coproporphyrinogen-III. This Histophilus somni (strain 2336) (Haemophilus somnus) protein is Uroporphyrinogen decarboxylase.